The chain runs to 229 residues: Uracil-DNA glycosylase (229 aa).

Catalysis depends on Asp-65, which acts as the Proton acceptor.

Belongs to the uracil-DNA glycosylase (UDG) superfamily. UNG family.

The protein resides in the cytoplasm. The catalysed reaction is Hydrolyzes single-stranded DNA or mismatched double-stranded DNA and polynucleotides, releasing free uracil.. In terms of biological role, excises uracil residues from the DNA which can arise as a result of misincorporation of dUMP residues by DNA polymerase or due to deamination of cytosine. This Brevibacillus brevis (strain 47 / JCM 6285 / NBRC 100599) protein is Uracil-DNA glycosylase.